Consider the following 156-residue polypeptide: Peroxisome assembly protein 22 (156 aa).

A helical transmembrane segment spans residues 24–46; sequence LSIIAVGVLSTVAVTVGYLLYLY.

The protein belongs to the peroxin-22 family.

Its subcellular location is the peroxisome membrane. Involved in peroxisome biogenesis. The chain is Peroxisome assembly protein 22 (PEX22) from Kluyveromyces lactis (strain ATCC 8585 / CBS 2359 / DSM 70799 / NBRC 1267 / NRRL Y-1140 / WM37) (Yeast).